The chain runs to 367 residues: UDP-N-acetylglucosamine--N-acetylmuramyl-(pentapeptide) pyrophosphoryl-undecaprenol N-acetylglucosamine transferase (367 aa).

UDP-N-acetyl-alpha-D-glucosamine-binding positions include 15-17 (TGG), Asn127, Arg163, Ser191, Ile249, and Gln294.

Belongs to the glycosyltransferase 28 family. MurG subfamily.

The protein localises to the cell inner membrane. The enzyme catalyses di-trans,octa-cis-undecaprenyl diphospho-N-acetyl-alpha-D-muramoyl-L-alanyl-D-glutamyl-meso-2,6-diaminopimeloyl-D-alanyl-D-alanine + UDP-N-acetyl-alpha-D-glucosamine = di-trans,octa-cis-undecaprenyl diphospho-[N-acetyl-alpha-D-glucosaminyl-(1-&gt;4)]-N-acetyl-alpha-D-muramoyl-L-alanyl-D-glutamyl-meso-2,6-diaminopimeloyl-D-alanyl-D-alanine + UDP + H(+). It functions in the pathway cell wall biogenesis; peptidoglycan biosynthesis. Functionally, cell wall formation. Catalyzes the transfer of a GlcNAc subunit on undecaprenyl-pyrophosphoryl-MurNAc-pentapeptide (lipid intermediate I) to form undecaprenyl-pyrophosphoryl-MurNAc-(pentapeptide)GlcNAc (lipid intermediate II). The protein is UDP-N-acetylglucosamine--N-acetylmuramyl-(pentapeptide) pyrophosphoryl-undecaprenol N-acetylglucosamine transferase of Burkholderia mallei (strain NCTC 10247).